The sequence spans 462 residues: Myrosinase-binding protein 1 (462 aa).

The tract at residues 1 to 23 is disordered; that stretch reads MSTGGPQKLEAQGGKEGKEWDDG. 3 Jacalin-type lectin domains span residues 6-148, 157-300, and 310-453; these read PQKL…YFAP, PNKV…YFAP, and TKKL…HIVP. The segment covering 13–23 has biased composition (basic and acidic residues); that stretch reads GGKEGKEWDDG.

The protein belongs to the jacalin lectin family. In terms of tissue distribution, expressed exclusively in flowers, in male and female organs, petals and pedicels. Not detected in pollen grains or sepals.

The protein is Myrosinase-binding protein 1 (MBP1) of Arabidopsis thaliana (Mouse-ear cress).